Here is a 1561-residue protein sequence, read N- to C-terminus: Sterile alpha motif domain-containing protein 9-like (1561 aa).

Positions 14-79 (WTKEHVRKWV…RMYNKLISSP (66 aa)) constitute an SAM domain. A disordered region spans residues 78 to 157 (SPESHNQDSR…DNKPKPEQMS (80 aa)). 2 stretches are compositionally biased toward basic and acidic residues: residues 82–107 (HNQD…KNEE) and 142–153 (VTKDMEDNKPKP).

In terms of assembly, interacts with EEA1.

The protein resides in the early endosome. Its subcellular location is the mitochondrion. Functionally, may be involved in endosome fusion. Mediates down-regulation of growth factor signaling via internalization of growth factor receptors. In Mus musculus (Mouse), this protein is Sterile alpha motif domain-containing protein 9-like (Samd9l).